A 310-amino-acid polypeptide reads, in one-letter code: Thioredoxin reductase (310 aa).

34–41 is an FAD binding site; the sequence is NGIQPGGQ. Cys135 and Cys138 form a disulfide bridge. Position 281–290 (281–290) interacts with FAD; that stretch reads DVQDKIYRQA.

Belongs to the class-II pyridine nucleotide-disulfide oxidoreductase family. Homodimer. FAD serves as cofactor.

It is found in the cytoplasm. The catalysed reaction is [thioredoxin]-dithiol + NADP(+) = [thioredoxin]-disulfide + NADPH + H(+). The chain is Thioredoxin reductase (trxB) from Rickettsia bellii (strain RML369-C).